Here is an 828-residue protein sequence, read N- to C-terminus: Neurotrophin receptor-interacting factor 1 (828 aa).

One can recognise a KRAB 1 domain in the interval 14 to 85; sequence VKFEDVSLTF…QREIPQDTLP (72 aa). Lys-15 participates in a covalent cross-link: Glycyl lysine isopeptide (Lys-Gly) (interchain with G-Cter in ubiquitin). Positions 158 to 240 constitute an SCAN box domain; the sequence is RQKFRHFQYE…ALLENMTSVS (83 aa). A KRAB 2 domain is found at 280-370; sequence VTFQDVAVDF…ESILEDGVKE (91 aa). Disordered stretches follow at residues 328 to 355, 377 to 490, and 575 to 611; these read RELT…RNGT, NQVG…DPIT, and QKGY…LSTS. The span at 345-355 shows a compositional bias: polar residues; it reads PNTNDLSRNGT. A compositionally biased stretch (basic and acidic residues) spans 384 to 394; it reads EKGHPQKKFSE. Positions 418–433 are enriched in basic residues; that stretch reads KYVKVKQKGTGKRKGR. The span at 458–478 shows a compositional bias: polar residues; that stretch reads RSGSTPVTHGSSIKKQQQGSE. Positions 589–599 are enriched in basic residues; that stretch reads SWKHIKPHQKG. A compositionally biased stretch (basic and acidic residues) spans 600-611; the sequence is SKGERVEELSTS. 5 C2H2-type zinc fingers span residues 684–706, 712–734, 740–762, 768–790, and 796–818; these read CRCS…KKIH, YMCM…LRIH, FECS…LRTH, YHCE…ERTH, and YVCI…QKTH.

Belongs to the krueppel C2H2-type zinc-finger protein family. In terms of assembly, interacts with NGFR/p75(NTR). Interacts (via KRAB 1 domain) with TRAF6. Interacts (when ubiquitinated at Lys-15) with SQSTM1/p62. In terms of processing, ubiquitinated by TRAF6 at Lys-15 through 'Lys-63'-linked polyubiquitination. 'Lys-63'-linked polyubiquitination occurs in response to NGFR/p75(NTR) cleavage by gamma-secretase and promotes binding with the ICD cleavage product of NGFR/p75(NTR), followed by translocation into the nucleus and subsequent apoptosis. In terms of tissue distribution, ubiquitously expressed at low level. Expressed at higher level in testis.

It localises to the cytoplasm. Its subcellular location is the nucleus. In terms of biological role, transcription regulator involved in NGFR/p75(NTR)-mediated apoptosis. Essential component of the NGFR/p75(NTR) apoptotic pathway: upon ligand-binding and subsequent cleavage of NGFR/p75(NTR), binds to the intracellular domain (ICD) cleavage product of NGFR/p75(NTR), translocates to the nucleus and induces apoptosis, possibly by regulating expression of key regulators of apoptosis. Induces NGFR/p75(NTR)-mediated apoptosis in retina and sympathetic neurons. May also regulate expression of neuronal cholesterol biosynthesis genes. Probably acts as a transcription repressor: specifically binds to the 3'-end of zinc-finger coding genes and recruiting chromatin-modifying proteins such as SETDB1 and TRIM28/KAP1, leading to transcription repression. This is Neurotrophin receptor-interacting factor 1 (Nrif1) from Mus musculus (Mouse).